Consider the following 122-residue polypeptide: MIQQESRLKVADNSGAKELLCIRVLGGTRRRYANVGDVIVCSVKSATPGGVVKKGEVVKAVVVRTVSTTRRKDGTYIKFDENAAVIIKDDKQMVGTRIFGPVTRELRDRDFMKIVSLAPEVL.

This sequence belongs to the universal ribosomal protein uL14 family. Part of the 50S ribosomal subunit. Forms a cluster with proteins L3 and L19. In the 70S ribosome, L14 and L19 interact and together make contacts with the 16S rRNA in bridges B5 and B8.

Functionally, binds to 23S rRNA. Forms part of two intersubunit bridges in the 70S ribosome. In Alkaliphilus metalliredigens (strain QYMF), this protein is Large ribosomal subunit protein uL14.